Consider the following 145-residue polypeptide: Meiotically up-regulated gene 124 protein (145 aa).

The next 2 membrane-spanning stretches (helical) occupy residues 18–38 and 95–115; these read IILT…CPSI and FAWS…NFFL.

It localises to the membrane. Its function is as follows. Has a role in meiosis. The chain is Meiotically up-regulated gene 124 protein (mug124) from Schizosaccharomyces pombe (strain 972 / ATCC 24843) (Fission yeast).